The primary structure comprises 175 residues: Bifunctional protein PyrR (175 aa).

The PRPP-binding motif lies at 98-110 (VIIIDDVLYTGRT).

The protein belongs to the purine/pyrimidine phosphoribosyltransferase family. PyrR subfamily. In terms of assembly, homodimer and homohexamer; in equilibrium.

It catalyses the reaction UMP + diphosphate = 5-phospho-alpha-D-ribose 1-diphosphate + uracil. Functionally, regulates transcriptional attenuation of the pyrimidine nucleotide (pyr) operon by binding in a uridine-dependent manner to specific sites on pyr mRNA. This disrupts an antiterminator hairpin in the RNA and favors formation of a downstream transcription terminator, leading to a reduced expression of downstream genes. Its function is as follows. Also displays a weak uracil phosphoribosyltransferase activity which is not physiologically significant. The sequence is that of Bifunctional protein PyrR from Staphylococcus carnosus (strain TM300).